The sequence spans 214 residues: Adenylate kinase (214 aa).

Position 10–15 (10–15 (GAGKGT)) interacts with ATP. Residues 30 to 59 (STGDMFREEISAKSELGRKVEDILKRGELV) form an NMP region. AMP contacts are provided by residues T31, R36, 57–59 (ELV), 85–88 (GYPR), and Q92. Positions 126 to 163 (NRRICKNCGKIYNLITLPPKINGKCDVCGGELYQREDD) are LID. R127 contributes to the ATP binding site. Zn(2+) contacts are provided by C130 and C133. Residue 136 to 137 (IY) coordinates ATP. C150 and C153 together coordinate Zn(2+). AMP is bound by residues R160 and R171. M199 contributes to the ATP binding site.

It belongs to the adenylate kinase family. In terms of assembly, monomer.

It is found in the cytoplasm. The catalysed reaction is AMP + ATP = 2 ADP. Its pathway is purine metabolism; AMP biosynthesis via salvage pathway; AMP from ADP: step 1/1. Its function is as follows. Catalyzes the reversible transfer of the terminal phosphate group between ATP and AMP. Plays an important role in cellular energy homeostasis and in adenine nucleotide metabolism. The chain is Adenylate kinase from Thermosipho melanesiensis (strain DSM 12029 / CIP 104789 / BI429).